The following is a 599-amino-acid chain: Elongation factor 4 (599 aa).

The 183-residue stretch at 2–184 (KNIRNFSIIA…RLVRDIPPPQ (183 aa)) folds into the tr-type G domain. Residues 14 to 19 (DHGKST) and 131 to 134 (NKID) each bind GTP.

It belongs to the TRAFAC class translation factor GTPase superfamily. Classic translation factor GTPase family. LepA subfamily.

Its subcellular location is the cell inner membrane. The catalysed reaction is GTP + H2O = GDP + phosphate + H(+). In terms of biological role, required for accurate and efficient protein synthesis under certain stress conditions. May act as a fidelity factor of the translation reaction, by catalyzing a one-codon backward translocation of tRNAs on improperly translocated ribosomes. Back-translocation proceeds from a post-translocation (POST) complex to a pre-translocation (PRE) complex, thus giving elongation factor G a second chance to translocate the tRNAs correctly. Binds to ribosomes in a GTP-dependent manner. The chain is Elongation factor 4 from Salmonella arizonae (strain ATCC BAA-731 / CDC346-86 / RSK2980).